A 212-amino-acid polypeptide reads, in one-letter code: uncharacterized protein (212 aa).

This is an uncharacterized protein from Acanthamoeba polyphaga mimivirus (APMV).